Here is a 287-residue protein sequence, read N- to C-terminus: Ribosomal RNA small subunit methyltransferase A (287 aa).

Asparagine 28, leucine 30, glycine 55, glutamate 76, aspartate 101, and asparagine 125 together coordinate S-adenosyl-L-methionine.

The protein belongs to the class I-like SAM-binding methyltransferase superfamily. rRNA adenine N(6)-methyltransferase family. RsmA subfamily.

The protein localises to the cytoplasm. It carries out the reaction adenosine(1518)/adenosine(1519) in 16S rRNA + 4 S-adenosyl-L-methionine = N(6)-dimethyladenosine(1518)/N(6)-dimethyladenosine(1519) in 16S rRNA + 4 S-adenosyl-L-homocysteine + 4 H(+). Specifically dimethylates two adjacent adenosines (A1518 and A1519) in the loop of a conserved hairpin near the 3'-end of 16S rRNA in the 30S particle. May play a critical role in biogenesis of 30S subunits. This chain is Ribosomal RNA small subunit methyltransferase A, found in Alkaliphilus metalliredigens (strain QYMF).